Here is a 193-residue protein sequence, read N- to C-terminus: Achaete-scute homolog 2 (193 aa).

Disordered regions lie at residues 1–58 and 128–177; these read MDSR…RNER and PLPR…GALS. The region spanning 50–102 is the bHLH domain; it reads AAVARRNERERNRVKLVNLGFQALRQHVPHGGASKKLSKVETLRSAVEYIRAL. Residues 128–152 show a composition bias toward low complexity; the sequence is PLPRAPSGTPATAASPSCASSSPGR.

Efficient DNA binding requires dimerization with another basic helix-loop-helix (bHLH) protein. Forms heterodimers with bHLH transcription factor TCF3. May not heterodimerise with bHLH protein HAND1. In terms of tissue distribution, expressed in placenta.

The protein localises to the nucleus. In terms of biological role, transcription factor. Binds to E-box motifs 5'-CANNTG-3' in the regulatory elements of target genes, probably as a heterodimer with another basic helix-loop-helix (bHLH) protein such as the transcription factor TCF3. May bind both open and closed chromatin, acting as a pioneer transcription factor to allow other factors to bind and activate lineage-specific genes. Required during post-implantation development for the generation of some differentiated trophoblast cell types. Transcriptional activity of ASCL2 may be antagonised in a subset of trophoblast cells by bHLH transcription factor HAND1, perhaps by competing for dimerization with other bHLH proteins. Involved in differentiation and function of follicular T-helper (Tfh) cells, thereby playing a role in germinal center responses; probably modulates expression of genes involved in Tfh cell function, such as BCL6. May also act as a suppressor of Th1-, Th2- and Th17-cell differentiation. Induces the formation of stem cells in intestinal crypts in vitro, synergistically activating transcription of target genes, such as SOX9, together with TCF4/beta-catenin. May form a bistable transcriptional switch, controlling expression of its own gene together with Wnt/R-spondin signaling, and thereby maintaining stem cell characteristics. Modulates expression of target genes, including perhaps down-regulating EGR1/Krox24 and chemokine CXCL10/Mob-1 and up-regulating CXCR4 and CDKN1C/p57kip2, in Schwann cells. May play a role in reducing proliferation of Schwann cells, perhaps acting via modulation of expression of CDKN1C. May be dispensable for blastocyst formation and later embryonic function. May be involved in the determination of neuronal precursors. This chain is Achaete-scute homolog 2 (ASCL2), found in Bos taurus (Bovine).